Reading from the N-terminus, the 250-residue chain is Urease accessory protein UreD (250 aa).

Belongs to the UreD family. As to quaternary structure, ureD, UreF and UreG form a complex that acts as a GTP-hydrolysis-dependent molecular chaperone, activating the urease apoprotein by helping to assemble the nickel containing metallocenter of UreC. The UreE protein probably delivers the nickel.

The protein resides in the cytoplasm. Its function is as follows. Required for maturation of urease via the functional incorporation of the urease nickel metallocenter. In Aliarcobacter butzleri (strain RM4018) (Arcobacter butzleri), this protein is Urease accessory protein UreD.